A 336-amino-acid chain; its full sequence is Ornithine carbamoyltransferase, catabolic (336 aa).

Residues 62-65 (STRT), glutamine 89, arginine 113, and 140-143 (HPTQ) contribute to the carbamoyl phosphate site. L-ornithine contacts are provided by residues asparagine 172, aspartate 236, and 240-241 (SM). Carbamoyl phosphate contacts are provided by residues 277–278 (CL) and arginine 322.

It belongs to the aspartate/ornithine carbamoyltransferase superfamily. OTCase family.

The protein resides in the cytoplasm. It catalyses the reaction carbamoyl phosphate + L-ornithine = L-citrulline + phosphate + H(+). The protein operates within amino-acid degradation; L-arginine degradation via ADI pathway; carbamoyl phosphate from L-arginine: step 2/2. Its function is as follows. Reversibly catalyzes the transfer of the carbamoyl group from carbamoyl phosphate (CP) to the N(epsilon) atom of ornithine (ORN) to produce L-citrulline. In Staphylococcus aureus (strain MSSA476), this protein is Ornithine carbamoyltransferase, catabolic.